The chain runs to 804 residues: Phenylalanine--tRNA ligase beta subunit (804 aa).

In terms of domain architecture, tRNA-binding spans 39–155; the sequence is EEGLKKLVVG…ADVKPGQDVY (117 aa). The B5 domain occupies 408–483; sequence REPVVVKTTV…RIYGYDNLKS (76 aa). Residues aspartate 461, aspartate 467, glutamate 470, and glutamate 471 each contribute to the Mg(2+) site. Positions 711 to 804 constitute an FDX-ACB domain; the sequence is PKFPAIERDL…LENDLDIKVR (94 aa).

It belongs to the phenylalanyl-tRNA synthetase beta subunit family. Type 1 subfamily. As to quaternary structure, tetramer of two alpha and two beta subunits. Mg(2+) is required as a cofactor.

Its subcellular location is the cytoplasm. It carries out the reaction tRNA(Phe) + L-phenylalanine + ATP = L-phenylalanyl-tRNA(Phe) + AMP + diphosphate + H(+). The protein is Phenylalanine--tRNA ligase beta subunit of Lactobacillus acidophilus (strain ATCC 700396 / NCK56 / N2 / NCFM).